We begin with the raw amino-acid sequence, 197 residues long: MYAYLKGIITKITAKYIVLETNGIGYILHVANPYAYSGQVNQEDQIYVHQVVREDAHLLYGFRSEDEKKLFLSLISVSGIGPVSALAIIAADDNAGLVQAIETKNITYLTKFPKIGKKTAQQMVLDLEGKVVVAGDDLPAKVAVQASAENQELEEAMEAMLALGYKATELKKIKKFFEGTTDTAENYIKSALKMLVK.

Residues 1–63 (MYAYLKGIIT…EDAHLLYGFR (63 aa)) form a domain I region. The tract at residues 64–142 (SEDEKKLFLS…VAGDDLPAKV (79 aa)) is domain II. A flexible linker region spans residues 143–147 (AVQAS). Positions 148–197 (AENQELEEAMEAMLALGYKATELKKIKKFFEGTTDTAENYIKSALKMLVK) are domain III.

This sequence belongs to the RuvA family. In terms of assembly, homotetramer. Forms an RuvA(8)-RuvB(12)-Holliday junction (HJ) complex. HJ DNA is sandwiched between 2 RuvA tetramers; dsDNA enters through RuvA and exits via RuvB. An RuvB hexamer assembles on each DNA strand where it exits the tetramer. Each RuvB hexamer is contacted by two RuvA subunits (via domain III) on 2 adjacent RuvB subunits; this complex drives branch migration. In the full resolvosome a probable DNA-RuvA(4)-RuvB(12)-RuvC(2) complex forms which resolves the HJ.

It is found in the cytoplasm. Functionally, the RuvA-RuvB-RuvC complex processes Holliday junction (HJ) DNA during genetic recombination and DNA repair, while the RuvA-RuvB complex plays an important role in the rescue of blocked DNA replication forks via replication fork reversal (RFR). RuvA specifically binds to HJ cruciform DNA, conferring on it an open structure. The RuvB hexamer acts as an ATP-dependent pump, pulling dsDNA into and through the RuvAB complex. HJ branch migration allows RuvC to scan DNA until it finds its consensus sequence, where it cleaves and resolves the cruciform DNA. This is Holliday junction branch migration complex subunit RuvA from Streptococcus pneumoniae serotype 19F (strain G54).